The chain runs to 301 residues: Rhodopsin (301 aa).

Residues 1-18 (LHMIHLHWYQYPPMNPMM) are Extracellular-facing. A helical membrane pass occupies residues 19-43 (YPLLLVFMLITGILCLAGNFVTIWV). Topologically, residues 44-55 (FMNTKSLRTPAN) are cytoplasmic. Residues 56 to 78 (LLVVNLAMSDFLMMFTMFPPMMI) form a helical membrane-spanning segment. At 79–92 (TCYYHTWTLGATFC) the chain is on the extracellular side. A disulfide bridge links C92 with C169. A helical transmembrane segment spans residues 93 to 115 (EVYAFLGNLCGCASIWTMVFITF). The short motif at 116-118 (DRY) is the 'Ionic lock' involved in activated form stabilization element. At 116 to 134 (DRYNVIVKGVAGEPLSTKK) the chain is on the cytoplasmic side. The helical transmembrane segment at 135 to 155 (ASLWILTVWVLSFTWCVAPFF) threads the bilayer. The Extracellular portion of the chain corresponds to 156-182 (GWNRYVPEGNLTGCGTDYLSEDILSRS). A glycan (N-linked (GlcNAc...) asparagine) is linked at N165. The helical transmembrane segment at 183-204 (YLYIYSTWVYFLPLAITIYCYV) threads the bilayer. The Cytoplasmic segment spans residues 205–245 (FIIKAVAAHEKGMRDQAKKMGIKSLRNEEAQKTSAECRLAK). A helical transmembrane segment spans residues 246 to 267 (IAMTTVALWFIAWTPYLLINWV). Residues 268-278 (GMFARSYLSPV) are Extracellular-facing. Residues 279-300 (YTIWGYVFAKANAVYNPIVYAI) traverse the membrane as a helical segment. N6-(retinylidene)lysine is present on K288.

This sequence belongs to the G-protein coupled receptor 1 family. Opsin subfamily. Homodimer. Interacts with GNAQ. Contains one covalently linked retinal chromophore.

The protein localises to the cell projection. Its subcellular location is the rhabdomere membrane. In terms of biological role, photoreceptor required for image-forming vision at low light intensity. Can use both retinal and 3-dehydroretinal as visual pigment. Light-induced isomerization of 11-cis to all-trans retinal triggers a conformational change that activates signaling via G-proteins. Signaling via GNAQ probably mediates the activation of phospholipase C. This is Rhodopsin (RHO) from Lacunicambarus ludovicianus (Painted devil crayfish).